The sequence spans 89 residues: Small ribosomal subunit protein uS15 (89 aa).

It belongs to the universal ribosomal protein uS15 family. In terms of assembly, part of the 30S ribosomal subunit. Forms a bridge to the 50S subunit in the 70S ribosome, contacting the 23S rRNA.

Its function is as follows. One of the primary rRNA binding proteins, it binds directly to 16S rRNA where it helps nucleate assembly of the platform of the 30S subunit by binding and bridging several RNA helices of the 16S rRNA. In terms of biological role, forms an intersubunit bridge (bridge B4) with the 23S rRNA of the 50S subunit in the ribosome. The polypeptide is Small ribosomal subunit protein uS15 (Tolumonas auensis (strain DSM 9187 / NBRC 110442 / TA 4)).